The sequence spans 774 residues: E3 ubiquitin-protein ligase RFWD3 (774 aa).

Disordered regions lie at residues 32-126 (GTIE…TAGA) and 203-281 (PYPL…SAME). Phosphoserine; by ATM and ATR is present on residues S59 and S75. Over residues 92 to 103 (LTEEVQPSEENM) the composition is skewed to acidic residues. The span at 108 to 121 (PGTSEEPSQGSGAN) shows a compositional bias: polar residues. The span at 223–242 (SDSDGSAEDEEVVVQAEEPE) shows a compositional bias: acidic residues. The RING-type; degenerate zinc-finger motif lies at 288-332 (CTICLEQWTNAGDHRISALRCGHLFGFRCISKWLKGQTRKCPQCN). Residues 358-403 (RMKSDLLNEQMLRKQAELESAQCRLQLQVLIDKCTKLNSRVQDLEK) adopt a coiled-coil conformation. 3 WD repeats span residues 493 to 535 (IPMH…VVQT), 536 to 568 (YNTGRPVWSCCWCLDENNYVYAGLASGSILIYD), and 583 to 628 (KARC…SHKP).

In terms of assembly, interacts with MDM2 and p53/TP53. Binds to the RPA complex via direct interaction with RPA2. Interacts with RAD51. Post-translationally, phosphorylated at Ser-59 and Ser-75 upon DNA damage by ATM or ATR. ATM phosphorylation occurs at early times upon DNA damage, while ATR is the major kinase at later times. Phosphorylation by ATM and ATR is required to stabilize p53/TP53. Part of the phosphorylation depends upon RPA2 presence.

The protein localises to the nucleus. Its subcellular location is the PML body. The protein resides in the cytoplasm. The enzyme catalyses S-ubiquitinyl-[E2 ubiquitin-conjugating enzyme]-L-cysteine + [acceptor protein]-L-lysine = [E2 ubiquitin-conjugating enzyme]-L-cysteine + N(6)-ubiquitinyl-[acceptor protein]-L-lysine.. Its pathway is protein modification; protein ubiquitination. E3 ubiquitin-protein ligase required for the repair of DNA interstrand cross-links (ICL) in response to DNA damage. Plays a key role in RPA-mediated DNA damage signaling and repair. Acts by mediating ubiquitination of the RPA complex (RPA1, RPA2 and RPA3 subunits) and RAD51 at stalled replication forks, leading to remove them from DNA damage sites and promote homologous recombination. Also mediates the ubiquitination of p53/TP53 in the late response to DNA damage, and acts as a positive regulator of p53/TP53 stability, thereby regulating the G1/S DNA damage checkpoint. May act by catalyzing the formation of short polyubiquitin chains on p53/TP53 that are not targeted to the proteasome. In response to ionizing radiation, interacts with MDM2 and enhances p53/TP53 ubiquitination, possibly by restricting MDM2 from extending polyubiquitin chains on ubiquitinated p53/TP53. Required to translesion DNA synthesis across DNA-protein cross-link adducts by catalyzing ubiquitination of proteins on single-stranded DNA (ssDNA). This is E3 ubiquitin-protein ligase RFWD3 (Rfwd3) from Mus musculus (Mouse).